An 81-amino-acid polypeptide reads, in one-letter code: Acyl carrier protein (81 aa).

In terms of domain architecture, Carrier spans A2–Q80. S40 is modified (O-(pantetheine 4'-phosphoryl)serine).

The protein belongs to the acyl carrier protein (ACP) family. 4'-phosphopantetheine is transferred from CoA to a specific serine of apo-ACP by AcpS. This modification is essential for activity because fatty acids are bound in thioester linkage to the sulfhydryl of the prosthetic group.

The protein resides in the cytoplasm. Its pathway is lipid metabolism; fatty acid biosynthesis. Carrier of the growing fatty acid chain in fatty acid biosynthesis. This chain is Acyl carrier protein, found in Renibacterium salmoninarum (strain ATCC 33209 / DSM 20767 / JCM 11484 / NBRC 15589 / NCIMB 2235).